Reading from the N-terminus, the 81-residue chain is U17-lycotoxin-Ls1a (81 aa).

The N-terminal stretch at 1-22 (MSSKVQAVLLLVGVITFLAVHA) is a signal peptide. Residues 23 to 34 (QEELSENTESER) constitute a propeptide that is removed on maturation. Disulfide bonds link Cys-36/Cys-51, Cys-50/Cys-67, and Cys-58/Cys-65.

It belongs to the neurotoxin 02 (plectoxin) family. As to expression, expressed by the venom gland.

The protein resides in the secreted. The sequence is that of U17-lycotoxin-Ls1a from Lycosa singoriensis (Wolf spider).